Consider the following 611-residue polypeptide: Protein halfway (611 aa).

Positions 1–22 (MLAYTHGTWLLLLLLLVAGACA) are cleaved as a signal peptide. 3 disordered regions span residues 31-64 (DPAA…LKED), 90-132 (SLAE…AAPE), and 154-185 (GRAE…CQCR). Basic residues predominate over residues 43-59 (AHAHPQARHHHHAHPHA). The span at 90–101 (SLAETQSMSDPG) shows a compositional bias: polar residues. Low complexity predominate over residues 102-123 (SVTDTTSTSTSHSTSTTSTTSP). The span at 159–183 (SEGQGSTVAQSEAQNRGGQGNSQCQ) shows a compositional bias: polar residues. N-linked (GlcNAc...) asparagine glycans are attached at residues Asn221, Asn246, Asn264, and Asn269. LRR repeat units lie at residues 236-257 (SLQS…FPRL), 259-280 (ALKC…AVKD), 283-304 (HLEF…NQNK), and 313-334 (NMRM…NFLN). One can recognise an LRRNT domain in the interval 361-416 (ENRKRCVTNCPVIPNYGSCNCTLENIMIIQDNQSKPQCHVDCSNLGLVELPQRLPD). LRR repeat units follow at residues 417–438 (NTFM…FHTN), 443–464 (NINR…EGTK), and 468–489 (TFQR…FLNN). One can recognise an LRRCT domain in the interval 505 to 554 (NKLQCDCNSAKTLQNWLKERSSDIPDYMEIRCRNMPQRVIELQEAKLCQS).

Has a role in the ecdysone induced cascade; probably indirect control of 'late' ecdysone genes. In Drosophila melanogaster (Fruit fly), this protein is Protein halfway.